An 82-amino-acid chain; its full sequence is Small ribosomal subunit protein eS27 (82 aa).

Residues C37, C40, C56, and C59 each coordinate Zn(2+).

This sequence belongs to the eukaryotic ribosomal protein eS27 family. In terms of assembly, component of the small ribosomal subunit. Mature ribosomes consist of a small (40S) and a large (60S) subunit. The 40S subunit contains about 32 different proteins and 1 molecule of RNA (18S). The 60S subunit contains 45 different proteins and 3 molecules of RNA (25S, 5.8S and 5S). Zn(2+) serves as cofactor.

The protein resides in the cytoplasm. Its function is as follows. Component of the ribosome, a large ribonucleoprotein complex responsible for the synthesis of proteins in the cell. The small ribosomal subunit (SSU) binds messenger RNAs (mRNAs) and translates the encoded message by selecting cognate aminoacyl-transfer RNA (tRNA) molecules. The large subunit (LSU) contains the ribosomal catalytic site termed the peptidyl transferase center (PTC), which catalyzes the formation of peptide bonds, thereby polymerizing the amino acids delivered by tRNAs into a polypeptide chain. The nascent polypeptides leave the ribosome through a tunnel in the LSU and interact with protein factors that function in enzymatic processing, targeting, and the membrane insertion of nascent chains at the exit of the ribosomal tunnel. This chain is Small ribosomal subunit protein eS27 (RPS27), found in Candida albicans (strain SC5314 / ATCC MYA-2876) (Yeast).